A 298-amino-acid chain; its full sequence is Probable 3-mercaptopyruvate sulfurtransferase (298 aa).

Residues 24 to 141 enclose the Rhodanese 1 domain; that stretch reads NAQKTVLLDA…WKTEGLELET (118 aa). The tract at residues 142 to 175 is hinge; that stretch reads GEPRTPKPVVYEGAKLNKDLVASFDDIVKVIESP. S164 bears the Phosphoserine mark. A Rhodanese 2 domain is found at 176–292; it reads DAAGVHIVDA…YGKRANEDSS (117 aa). Position 190 (R190) interacts with substrate. C252 (cysteine persulfide intermediate) is an active-site residue.

It localises to the mitochondrion. It carries out the reaction 2-oxo-3-sulfanylpropanoate + [thioredoxin]-dithiol = [thioredoxin]-disulfide + hydrogen sulfide + pyruvate + H(+). In terms of biological role, required for formation of the 2-thio group of the 5-methoxycarbonylmethyl-2-thiouridine modified base in some tRNAs. This chain is Probable 3-mercaptopyruvate sulfurtransferase (tum1), found in Schizosaccharomyces pombe (strain 972 / ATCC 24843) (Fission yeast).